Consider the following 528-residue polypeptide: Nucleobase-ascorbate transporter 5 (528 aa).

The tract at residues 1–20 is disordered; that stretch reads MSAPKSGGDPLPHPPKEQLP. The next 12 helical transmembrane spans lie at 35 to 55, 71 to 91, 93 to 113, 133 to 153, 159 to 179, 181 to 201, 219 to 239, 285 to 305, 367 to 387, 390 to 410, 418 to 438, and 460 to 479; these read AVLLGFQHYLVMLGTTVLIPS, LIQTILFVAGLNTLLQTVFGT, LPAVIGASYTFVPVTISIMLS, TQGALIVASTLQIILGFSGLW, FLSPLSAAPLVGLVGYGLYEL, FPGVAKCIEIGLPGLIILILI, FAVIFSVAIVWLYAFFLTLGG, FAMMMASFVALVESTGAFIAV, AGFMIFFSILGKFGAVFASIP, IIAALYCLFFAYVGAGGLSLL, FRTLFILGFSIFLGLSIPQYF, and MVNVPFSSKAFVGGCVAYLL.

The protein belongs to the nucleobase:cation symporter-2 (NCS2) (TC 2.A.40) family. As to expression, weakly expressed in the vasculature of developing leaves.

It is found in the membrane. This is Nucleobase-ascorbate transporter 5 (NAT5) from Arabidopsis thaliana (Mouse-ear cress).